A 498-amino-acid chain; its full sequence is Myocyte-specific enhancer factor 2D homolog (498 aa).

Residues 1–100 (MGRKKIQIQR…KGFNGCDSPE (100 aa)) are interaction with hdac9. The MADS-box domain maps to 3 to 57 (RKKIQIQRITDERNRQVTFTKRKFGLMKKAYELSVLCDCEIALIIFNHSNKLFQY). Residues 58-86 (ASTDMDKVLLKYTEYNEPHESRTNADIIE) constitute a DNA-binding region (mef2-type). 3 disordered regions span residues 173–215 (LTDP…NSNG), 243–267 (LGKV…NSRK), and 411–498 (SIKR…AWVT). The segment covering 412–424 (IKREPASPNRERS) has biased composition (basic and acidic residues). Polar residues-rich tracts occupy residues 425–434 (TGTPLSCFSH) and 447–457 (DSLSSNASSFE).

The protein belongs to the MEF2 family. As to quaternary structure, binds DNA as a multimer, probably as a dimer. Interacts with hdac9. In terms of tissue distribution, restricted to the somitic mesoderm of early embryos and to the body muscle (myotomes) of the tadpole. Expressed in all tissues examined in the adult.

Its subcellular location is the nucleus. Functionally, may regulate muscle-specific transcription in the embryo and may regulate transcription of a variety of cell types in the adult. It binds to the sequence 5'-CTA[TA]4TAR-3'. This chain is Myocyte-specific enhancer factor 2D homolog (mef2d), found in Xenopus laevis (African clawed frog).